A 134-amino-acid chain; its full sequence is Small ribosomal subunit protein uS11 (134 aa).

The interval 1–21 (MPPKSRQGAGRKVRRKEKKNV) is disordered. The span at 9-21 (AGRKVRRKEKKNV) shows a compositional bias: basic residues.

This sequence belongs to the universal ribosomal protein uS11 family. Part of the 30S ribosomal subunit. Interacts with proteins S7 and S18. Binds to IF-3.

Functionally, located on the platform of the 30S subunit, it bridges several disparate RNA helices of the 16S rRNA. Forms part of the Shine-Dalgarno cleft in the 70S ribosome. This Thermobifida fusca (strain YX) protein is Small ribosomal subunit protein uS11.